The primary structure comprises 368 residues: Spermidine/putrescine import ATP-binding protein PotA (368 aa).

An ABC transporter domain is found at 8-238; it reads IELKNVSKIF…PVNLFVARFV (231 aa). ATP is bound at residue 40–47; sequence GPSGCGKT.

This sequence belongs to the ABC transporter superfamily. Spermidine/putrescine importer (TC 3.A.1.11.1) family. As to quaternary structure, the complex is composed of two ATP-binding proteins (PotA), two transmembrane proteins (PotB and PotC) and a solute-binding protein (PotD).

It is found in the cell membrane. The catalysed reaction is ATP + H2O + polyamine-[polyamine-binding protein]Side 1 = ADP + phosphate + polyamineSide 2 + [polyamine-binding protein]Side 1.. Part of the ABC transporter complex PotABCD involved in spermidine/putrescine import. Responsible for energy coupling to the transport system. In Lawsonia intracellularis (strain PHE/MN1-00), this protein is Spermidine/putrescine import ATP-binding protein PotA.